The sequence spans 1510 residues: Chromosome partition protein MukB (1510 aa).

A coiled-coil region spans residues 6–30 (ELENEIELESDEVIMENENVEEIVD). Position 75–82 (75–82 (GGNGAGKS)) interacts with ATP. 7 coiled-coil regions span residues 346 to 506 (QHRL…HKMS), 553 to 611 (QQTP…EDIS), 673 to 706 (MQSQ…RLSQ), 821 to 846 (SAAR…AQIA), 876 to 1064 (EALM…IQLQ), 1094 to 1149 (ERAR…RELV), and 1249 to 1304 (DAIE…LQNI). The interval 707-824 (PDGSEDPRLN…EIPLFGSAAR (118 aa)) is flexible hinge.

It belongs to the SMC family. MukB subfamily. In terms of assembly, homodimerization via its hinge domain. Binds to DNA via its C-terminal region. Interacts, and probably forms a ternary complex, with MukE and MukF via its C-terminal region. The complex formation is stimulated by calcium or magnesium. Interacts with tubulin-related protein FtsZ.

The protein localises to the cytoplasm. It localises to the nucleoid. Its function is as follows. Plays a central role in chromosome condensation, segregation and cell cycle progression. Functions as a homodimer, which is essential for chromosome partition. Involved in negative DNA supercoiling in vivo, and by this means organize and compact chromosomes. May achieve or facilitate chromosome segregation by condensation DNA from both sides of a centrally located replisome during cell division. The protein is Chromosome partition protein MukB of Haemophilus influenzae (strain PittGG).